Here is a 372-residue protein sequence, read N- to C-terminus: DNA replication and repair protein RecF (372 aa).

Position 30-37 (30-37 (GANGQGKT)) interacts with ATP.

Belongs to the RecF family.

Its subcellular location is the cytoplasm. In terms of biological role, the RecF protein is involved in DNA metabolism; it is required for DNA replication and normal SOS inducibility. RecF binds preferentially to single-stranded, linear DNA. It also seems to bind ATP. The polypeptide is DNA replication and repair protein RecF (Heliobacterium modesticaldum (strain ATCC 51547 / Ice1)).